The following is a 467-amino-acid chain: Histone acetyltransferase type B catalytic subunit (467 aa).

The interval 1-24 is disordered; the sequence is MVQKQQASAGPGTEPKKRRRVGFS. Residues 249–251 and 256–262 contribute to the acetyl-CoA site; these read ILV and QGKGLGS. Glu-283 serves as the catalytic Proton donor/acceptor.

The protein belongs to the HAT1 family.

It is found in the nucleus. Its subcellular location is the cytoplasm. It carries out the reaction L-lysyl-[protein] + acetyl-CoA = N(6)-acetyl-L-lysyl-[protein] + CoA + H(+). Functionally, acetylates soluble but not nucleosomal H4. Acetylates 'Lys-12' of histone H4. This chain is Histone acetyltransferase type B catalytic subunit (HAG2), found in Arabidopsis thaliana (Mouse-ear cress).